Reading from the N-terminus, the 201-residue chain is LexA repressor (201 aa).

Residues 28 to 48 constitute a DNA-binding region (H-T-H motif); sequence LREIAAKLGISGTLGVMKHLE. Catalysis depends on for autocatalytic cleavage activity residues Ser120 and Lys157.

This sequence belongs to the peptidase S24 family. As to quaternary structure, homodimer.

It catalyses the reaction Hydrolysis of Ala-|-Gly bond in repressor LexA.. Represses a number of genes involved in the response to DNA damage (SOS response), including recA and lexA. In the presence of single-stranded DNA, RecA interacts with LexA causing an autocatalytic cleavage which disrupts the DNA-binding part of LexA, leading to derepression of the SOS regulon and eventually DNA repair. The protein is LexA repressor of Geobacter sp. (strain M21).